The primary structure comprises 214 residues: Ubiquitin-conjugating enzyme E2 21 (214 aa).

The 148-residue stretch at 21–168 (ARVTRKCKEV…AVYWTSYFAN (148 aa)) folds into the UBC core domain. The active-site Glycyl thioester intermediate is Cys106. Residues 172–214 (DVEPDFNRKVGRLIEMGIRETEAIVYLSCNNWKLEQALQFIFD) enclose the UBA domain.

It belongs to the ubiquitin-conjugating enzyme family.

The catalysed reaction is S-ubiquitinyl-[E1 ubiquitin-activating enzyme]-L-cysteine + [E2 ubiquitin-conjugating enzyme]-L-cysteine = [E1 ubiquitin-activating enzyme]-L-cysteine + S-ubiquitinyl-[E2 ubiquitin-conjugating enzyme]-L-cysteine.. Its pathway is protein modification; protein ubiquitination. Functionally, acts with E3 ubiquitin-protein ligase trim-21 to catalyze the 'Lys-48'-linked polyubiquitination of ced-1, promoting its proteasomal degradation to maintain appropriate ced-1 levels for apoptotic cell clearance. This is Ubiquitin-conjugating enzyme E2 21 (ubc-21) from Caenorhabditis elegans.